We begin with the raw amino-acid sequence, 365 residues long: Alanine racemase (365 aa).

Catalysis depends on lysine 32, which acts as the Proton acceptor; specific for D-alanine. Position 32 is an N6-(pyridoxal phosphate)lysine (lysine 32). Arginine 128 is a substrate binding site. The active-site Proton acceptor; specific for L-alanine is tyrosine 257. Position 305 (methionine 305) interacts with substrate.

It belongs to the alanine racemase family. Requires pyridoxal 5'-phosphate as cofactor.

The enzyme catalyses L-alanine = D-alanine. It functions in the pathway amino-acid biosynthesis; D-alanine biosynthesis; D-alanine from L-alanine: step 1/1. Catalyzes the interconversion of L-alanine and D-alanine. May also act on other amino acids. This chain is Alanine racemase (alr), found in Francisella tularensis subsp. holarctica (strain LVS).